The chain runs to 555 residues: Protection of telomeres protein 1 (555 aa).

The protein belongs to the telombin family. Self-associates. Interacts with ccq1, poz1 and tpz1.

It localises to the nucleus. The protein resides in the chromosome. It is found in the telomere. Single-stranded telomeric DNA-binding protein that is required to protect the 3'-end telomeric overhang. It binds the consensus sequence 5'-GGTTAC-3'. Regulates telomerase and telomere length. The protein is Protection of telomeres protein 1 (pot1) of Schizosaccharomyces pombe (strain 972 / ATCC 24843) (Fission yeast).